The primary structure comprises 355 residues: MSVNYAAGLSPYADKGKCGLPEIFDPPEELERKVWELARLVWQSSHVVFHTGAGISTASGIPDFRGPHGVWTMEERGLAPKFDTTFESARPTQTHMALVQLERVGLLRFLVSQNVDGLHVRSGFPRDKLAELHGNMFVEECAKCKTQYVRDTVVGTMGLKATGRLCTVAKARGLRACRGELRDTILDWEDSLPDRDLALADEASRNADLSITLGTSLQIRPSGNLPLATKRRGGRLVIVNLQPTKHDRHADLRIHGYVDEVMTRLMKHLGLEIPAWDGPHVLERALPPLPRPPTPKLEPKEESPTRINGSIPAGSCLEPCAQHNGSEPASPKRERPTSPAPNRPPKRVKAEAVPS.

The residue at position 2 (Ser2) is an N-acetylserine. Residue Ser10 is modified to Phosphoserine. The Deacetylase sirtuin-type domain maps to 27–272 (PEELERKVWE…TRLMKHLGLE (246 aa)). Lys33 carries the post-translational modification N6-acetyllysine. NAD(+) contacts are provided by Ala53, Thr57, Phe64, Arg65, Trp71, Gln113, and His133. Catalysis depends on His133, which acts as the Proton acceptor. Residues Cys141, Cys144, and Cys166 each contribute to the Zn(2+) site. Lys170 participates in a covalent cross-link: Glycyl lysine isopeptide (Lys-Gly) (interchain with G-Cter in ubiquitin). Residue Cys177 coordinates Zn(2+). NAD(+)-binding residues include Gly214, Ser216, Asn240, Gln242, and Val258. The segment at 284–355 (RALPPLPRPP…KRVKAEAVPS (72 aa)) is disordered. Residues 287–296 (PPLPRPPTPK) show a composition bias toward pro residues. A Phosphothreonine modification is found at Thr294. 2 positions are modified to phosphoserine: Ser303 and Ser330.

The protein belongs to the sirtuin family. Class IV subfamily. As to quaternary structure, homodimer; binds to nucleosomes and DNA ends as a homodimer. Interacts with RELA; interferes with RELA binding to target DNA. Interacts with SMARCA5; promoting recruitment of SMARCA5/SNF2H to double-strand breaks (DSBs) sites. Interacts with the mTORC2 complex; preventing the ability of SIRT6 to deacetylate FOXO1. Interacts with the CLOCK-BMAL1 complex; recruited by the CLOCK-BMAL1 complex to regulate expression of clock-controlled genes. Interacts with CSNK2A2; preventing CSNK2A2 localization to the nucleus. Post-translationally, acetylated at Lys-33. Deacetylation at Lys-33 by SIRT1 promotes homomultimerization and binding to double-strand breaks (DSBs) sites. Phosphorylation at Ser-10 by MAPK8/JNK1 in response to oxidative stress stimulates the mono-ADP-ribosyltransferase activity on PARP1, leading to PARP1 recruitment to double-strand breaks (DSBs). In terms of processing, monoubiquitinated at Lys-170 by STUB1/CHIP, preventing its degradation by the proteasome. Post-translationally, sumoylated, leading to specifically decrease ability to deacetylate histone H3 at 'Lys-56' (H3K56ac).

The protein resides in the nucleus. It localises to the chromosome. The protein localises to the telomere. Its subcellular location is the endoplasmic reticulum. It catalyses the reaction N(6)-acetyl-L-lysyl-[protein] + NAD(+) + H2O = 2''-O-acetyl-ADP-D-ribose + nicotinamide + L-lysyl-[protein]. The enzyme catalyses N(6)-tetradecanoyl-L-lysyl-[protein] + NAD(+) + H2O = 2''-O-tetradecanoyl-ADP-D-ribose + nicotinamide + L-lysyl-[protein]. The catalysed reaction is N(6)-hexadecanoyl-L-lysyl-[protein] + NAD(+) + H2O = 2''-O-hexadecanoyl-ADP-D-ribose + nicotinamide + L-lysyl-[protein]. It carries out the reaction L-lysyl-[protein] + NAD(+) = N(6)-(ADP-D-ribosyl)-L-lysyl-[protein] + nicotinamide + H(+). It catalyses the reaction L-arginyl-[protein] + NAD(+) = N(omega)-(ADP-D-ribosyl)-L-arginyl-[protein] + nicotinamide + H(+). Compared to the defatty-acylase activity, the protein deacetylase activity is weak in vitro, and requires activation. The histone deacetylase activity is strongly activated upon binding to nucleosomes and chromatin in vivo. Two molecules of SIRT6 associate with the acidic patch of one nucleosome, while the C-terminal disordered region of SIRT6 associates with nucleosomal DNA, leading to efficient histone deacetylation. The protein-lysine deacetylase activity is also activated by long-chain free fatty-acids. Its function is as follows. NAD-dependent protein deacetylase, deacylase and mono-ADP-ribosyltransferase that plays an essential role in DNA damage repair, telomere maintenance, metabolic homeostasis, inflammation, tumorigenesis and aging. Displays protein-lysine deacetylase or defatty-acylase (demyristoylase and depalmitoylase) activity, depending on the context. Acts as a key histone deacetylase by catalyzing deacetylation of histone H3 at 'Lys-9', 'Lys-18' and 'Lys-56' (H3K9ac, H3K18ac and H3K56ac, respectively), suppressing target gene expression of several transcription factors, including NF-kappa-B. Acts as an inhibitor of transcription elongation by mediating deacetylation of H3K9ac and H3K56ac, preventing release of NELFE from chromatin and causing transcriptional pausing. Involved in DNA repair by promoting double-strand break (DSB) repair: acts as a DSB sensor by recognizing and binding DSB sites, leading to (1) recruitment of DNA repair proteins, such as SMARCA5/SNF2H, and (2) deacetylation of histone H3K9ac and H3K56ac. SIRT6 participation to DSB repair is probably involved in extension of life span. Also promotes DNA repair by deacetylating non-histone proteins, such as DDB2 and p53/TP53. Specifically deacetylates H3K18ac at pericentric heterochromatin, thereby maintaining pericentric heterochromatin silencing at centromeres and protecting against genomic instability and cellular senescence. Involved in telomere maintenance by catalyzing deacetylation of histone H3 in telomeric chromatin, regulating telomere position effect and telomere movement in response to DNA damage. Required for embryonic stem cell differentiation by mediating histone deacetylation of H3K9ac. Plays a major role in metabolism by regulating processes such as glycolysis, gluconeogenesis, insulin secretion and lipid metabolism. Inhibits glycolysis via histone deacetylase activity and by acting as a corepressor of the transcription factor HIF1A, thereby controlling the expression of multiple glycolytic genes. Has tumor suppressor activity by repressing glycolysis, thereby inhibiting the Warburg effect. Also regulates glycolysis and tumorigenesis by mediating deacetylation and nuclear export of non-histone proteins, such as isoform M2 of PKM (PKM2). Acts as a negative regulator of gluconeogenesis by mediating deacetylation of non-histone proteins, such as FOXO1 and KAT2A/GCN5. Promotes beta-oxidation of fatty acids during fasting by catalyzing deacetylation of NCOA2, inducing coactivation of PPARA. Acts as a regulator of lipid catabolism in brown adipocytes, both by catalyzing deacetylation of histones and non-histone proteins, such as FOXO1. Also acts as a regulator of circadian rhythms, both by regulating expression of clock-controlled genes involved in lipid and carbohydrate metabolism, and by catalyzing deacetylation of PER2. The defatty-acylase activity is specifically involved in regulation of protein secretion. Has high activity toward long-chain fatty acyl groups and mediates protein-lysine demyristoylation and depalmitoylation of target proteins, such as RRAS2 and TNF, thereby regulating their secretion. Also acts as a mono-ADP-ribosyltransferase by mediating mono-ADP-ribosylation of PARP1, TRIM28/KAP1 or SMARCC2/BAF170. Mono-ADP-ribosyltransferase activity is involved in DNA repair, cellular senescence, repression of LINE-1 retrotransposon elements and regulation of transcription. The sequence is that of NAD-dependent protein deacylase sirtuin-6 from Macaca fascicularis (Crab-eating macaque).